Reading from the N-terminus, the 304-residue chain is Mas-related G-protein coupled receptor member A (304 aa).

Over 1 to 17 (MDKTIPGSFNSRTLIPN) the chain is Extracellular. A helical membrane pass occupies residues 18–38 (LLIIISGLVGLIGNAMVFWLL). Residues 39–46 (GFRLARNA) are Cytoplasmic-facing. A helical membrane pass occupies residues 47-67 (FSVYILNLALADFLFLLCHII). Over 68-80 (DSTLLLLKFSYPN) the chain is Extracellular. Residues 81-101 (IIFLPCFNTVMMVPYIAGLSM) traverse the membrane as a helical segment. The Cytoplasmic segment spans residues 102-132 (LSAISTERCLSVVCPIWYRCRRPKHTSTVMC). Residues 133-153 (SAIWVLSLLICILNRYFCGFL) form a helical membrane-spanning segment. Topologically, residues 154 to 167 (DTKYEKDNRCLASN) are extracellular. A helical membrane pass occupies residues 168–188 (FFTAACLIFLFVVLCLSSLAL). Over 189-211 (LVRLFCGAGRMKLTRLYATIMLT) the chain is Cytoplasmic. The chain crosses the membrane as a helical span at residues 212–232 (VLVFLLCGLPFGIHWFLLIWI). Topologically, residues 233 to 244 (KIDYGKFAYGLY) are extracellular. Residues 245 to 265 (LAALVLTAVNSCANPIIYFFV) form a helical membrane-spanning segment. The Cytoplasmic portion of the chain corresponds to 266–304 (GSFRHQKHQTLKMVLQRALQDTPETAENTVEMSSSKVEP).

Belongs to the G-protein coupled receptor 1 family. Mas subfamily. Expressed in a subset of IB4-positive small diameter nociceptive dorsal root neurons.

It localises to the cell membrane. Its function is as follows. Orphan receptor activated by a subset of RFamide-family neuropeptides such as FLRF-amide and FMRF-amide. Mediates its action by association with G proteins that activate a phosphatidylinositol-calcium second messenger system. Its effect is mediated by G(q) and G(11) proteins. May regulate the function of nociceptive neurons by modulation of pain perception. The protein is Mas-related G-protein coupled receptor member A (Mrgpra) of Rattus norvegicus (Rat).